Consider the following 393-residue polypeptide: Formate-dependent phosphoribosylglycinamide formyltransferase (393 aa).

N(1)-(5-phospho-beta-D-ribosyl)glycinamide is bound by residues 22–23 (EL) and Glu82. Residues Arg114, Lys155, 160–165 (SSGKGQ), 195–198 (EGFI), and Glu203 each bind ATP. Residues 119-308 (RLAAEELKLP…QFALHARAIL (190 aa)) enclose the ATP-grasp domain. Mg(2+) contacts are provided by Glu267 and Glu279. N(1)-(5-phospho-beta-D-ribosyl)glycinamide is bound by residues Asp286, Lys356, and 363 to 364 (RR).

The protein belongs to the PurK/PurT family. In terms of assembly, homodimer.

The enzyme catalyses N(1)-(5-phospho-beta-D-ribosyl)glycinamide + formate + ATP = N(2)-formyl-N(1)-(5-phospho-beta-D-ribosyl)glycinamide + ADP + phosphate + H(+). Its pathway is purine metabolism; IMP biosynthesis via de novo pathway; N(2)-formyl-N(1)-(5-phospho-D-ribosyl)glycinamide from N(1)-(5-phospho-D-ribosyl)glycinamide (formate route): step 1/1. Involved in the de novo purine biosynthesis. Catalyzes the transfer of formate to 5-phospho-ribosyl-glycinamide (GAR), producing 5-phospho-ribosyl-N-formylglycinamide (FGAR). Formate is provided by PurU via hydrolysis of 10-formyl-tetrahydrofolate. In Pseudomonas syringae pv. syringae (strain B728a), this protein is Formate-dependent phosphoribosylglycinamide formyltransferase.